Reading from the N-terminus, the 213-residue chain is Ribosome maturation factor RimM (213 aa).

In terms of domain architecture, PRC barrel spans aspartate 99–leucine 175. The interval threonine 182–glutamine 213 is disordered. Residues arginine 189–arginine 199 are compositionally biased toward basic residues.

It belongs to the RimM family. In terms of assembly, binds ribosomal protein uS19.

The protein localises to the cytoplasm. An accessory protein needed during the final step in the assembly of 30S ribosomal subunit, possibly for assembly of the head region. Essential for efficient processing of 16S rRNA. May be needed both before and after RbfA during the maturation of 16S rRNA. It has affinity for free ribosomal 30S subunits but not for 70S ribosomes. The protein is Ribosome maturation factor RimM of Acidobacterium capsulatum (strain ATCC 51196 / DSM 11244 / BCRC 80197 / JCM 7670 / NBRC 15755 / NCIMB 13165 / 161).